Consider the following 591-residue polypeptide: uncharacterized protein (591 aa).

Residues Met1–Gly10 show a composition bias toward gly residues. Disordered stretches follow at residues Met1–Asp37, Arg110–Glu135, Glu324–Pro344, and Gly487–Leu517. Residues Asn11 to Asn32 are compositionally biased toward polar residues. Residues Arg110 to Gly132 show a composition bias toward low complexity. The segment covering Gln490–Leu507 has biased composition (basic and acidic residues).

It to C.muridarum TC_0268.

This is an uncharacterized protein from Chlamydia trachomatis serovar D (strain ATCC VR-885 / DSM 19411 / UW-3/Cx).